A 112-amino-acid polypeptide reads, in one-letter code: 2Fe-2S ferredoxin (112 aa).

The 2Fe-2S ferredoxin-type domain occupies 5-107 (IKVTFIINDE…GIKVRLPSAT (103 aa)). [2Fe-2S] cluster is bound by residues Cys-42, Cys-48, Cys-51, and Cys-88.

The protein belongs to the adrenodoxin/putidaredoxin family. It depends on [2Fe-2S] cluster as a cofactor.

In terms of biological role, ferredoxin are iron-sulfur proteins that transfer electrons in a wide variety of metabolic reactions. This Rickettsia prowazekii (strain Madrid E) protein is 2Fe-2S ferredoxin (fdxB).